The primary structure comprises 380 residues: Oocyte-specific homeobox protein 4 (380 aa).

5 disordered regions span residues 1-25, 43-95, 152-182, 234-303, and 339-380; these read MSKD…SFLV, VTPT…RKCR, KSSQ…FAAS, PRQK…CQTP, and TRSK…SSAY. Polar residues predominate over residues 43–53; the sequence is VTPTRPLQSSH. Positions 54–67 are enriched in basic and acidic residues; the sequence is SVHERDLHQKDSQE. The homeobox DNA-binding region spans 94 to 153; sequence CRKERTVYSKEQKCLLQEHFHQCQNPDLEQRKALALLIGVTEYKIQTWFKNRRAKECRKS. Basic and acidic residues predominate over residues 234–250; that stretch reads PRQKCRELSREPGHLSS. Residues 260–271 show a composition bias toward low complexity; it reads SSPSPAAGAESS. Polar residues-rich tracts occupy residues 278 to 302 and 351 to 380; these read LSLS…MCQT and NTVQ…SSAY.

The protein belongs to the paired homeobox family. Obox subfamily. In terms of tissue distribution, specifically expressed in early embryos.

Its subcellular location is the nucleus. In terms of biological role, transcription factor required for zygotic genome activation (ZGA), a critical event in early embryonic development during which the developmental control passes from maternally provided mRNAs to the expression of the zygotic genome after fertilization. Cannot compensate for loss of other members of the Obox family, suggesting that its function differs from other Obox family members. May regulate expression of histone genes in embryonic stem cells. Also involved in completion of meiosis of oocytes during the meiosis-I/meiosis-II transition. Required to maintain the nuclear membrane of the germinal vesicle in oocytes. The protein is Oocyte-specific homeobox protein 4 of Mus musculus (Mouse).